Reading from the N-terminus, the 121-residue chain is B-box domain protein 31 (121 aa).

Residues 26–72 (SVPVRCELCDGDASVFCEADSAFLCRKCDRWVHGANFLAWRHVRRVL) form a B box-type; atypical zinc finger. The short motif at 117–121 (PFVFL) is the PFVFL element.

Highly expressed in shoot apical meristems and in vascular tissues of leaves. Also detected in petioles.

Its function is as follows. Developmental regulator acting by forming heterodimeric complexes, that sequester CO and CO-like (COL) proteins into non-functional complexes. Involved in the CO-mediated long-day flowering-promotion pathway. Engages CO and the transcriptional repressor TPL in a tripartite complex. This is B-box domain protein 31 from Arabidopsis thaliana (Mouse-ear cress).